The sequence spans 357 residues: Peptide chain release factor 1 (357 aa).

Residue Gln234 is modified to N5-methylglutamine.

This sequence belongs to the prokaryotic/mitochondrial release factor family. Methylated by PrmC. Methylation increases the termination efficiency of RF1.

It is found in the cytoplasm. Its function is as follows. Peptide chain release factor 1 directs the termination of translation in response to the peptide chain termination codons UAG and UAA. The chain is Peptide chain release factor 1 from Arthrobacter sp. (strain FB24).